Consider the following 745-residue polypeptide: Cytoplasmic polyadenylation element-binding protein 3 (745 aa).

3 disordered regions span residues 1-45, 94-180, and 204-283; these read MNLN…KSPT, VGSK…TNNS, and NKAN…FGEL. Basic and acidic residues predominate over residues 162-175; that stretch reads LNFERDAEQKKDST. A compositionally biased stretch (polar residues) spans 219–229; the sequence is ETPTDSPQKGF. The segment covering 230 to 240 has biased composition (low complexity); that stretch reads SSSTESSPSDS. Over residues 241–255 the composition is skewed to polar residues; the sequence is MNQFPSREHFTSANE. Basic and acidic residues predominate over residues 264–276; sequence FQQEHGNKNRDSD. Residues 297 to 319 enclose the RRM domain; the sequence is IFVGGVPWDITEAALKDSFGEFG.

Cytoplasmic polyadenylation element binding protein that binds to and regulates the translation of specific mRNAs. May not be required for oogenesis. The polypeptide is Cytoplasmic polyadenylation element-binding protein 3 (cpb-3) (Caenorhabditis elegans).